The primary structure comprises 266 residues: Segregation and condensation protein A (266 aa).

The protein belongs to the ScpA family. In terms of assembly, component of a cohesin-like complex composed of ScpA, ScpB and the Smc homodimer, in which ScpA and ScpB bind to the head domain of Smc. The presence of the three proteins is required for the association of the complex with DNA.

Its subcellular location is the cytoplasm. Functionally, participates in chromosomal partition during cell division. May act via the formation of a condensin-like complex containing Smc and ScpB that pull DNA away from mid-cell into both cell halves. The sequence is that of Segregation and condensation protein A from Coxiella burnetii (strain RSA 493 / Nine Mile phase I).